Reading from the N-terminus, the 848-residue chain is Oligopeptide transport ATP-binding protein OppF (848 aa).

Positions 13-785 (VKALSMMFKV…PVHPYTRSLI (773 aa)) constitute an ABC transporter domain. Position 47–54 (47–54 (GESGSGKS)) interacts with ATP.

This sequence belongs to the ABC transporter superfamily. In terms of assembly, the complex is composed of two ATP-binding proteins (OppD and OppF), two transmembrane proteins (OppB and OppC) and a solute-binding protein (OppA).

Its subcellular location is the cell membrane. The catalysed reaction is a [peptide](out) + ATP + H2O = a [peptide](in) + ADP + phosphate + H(+). In terms of biological role, part of the ABC transporter complex OppABCDF involved in the uptake of oligopeptides. Probably responsible for energy coupling to the transport system. This Mycoplasma genitalium (strain ATCC 33530 / DSM 19775 / NCTC 10195 / G37) (Mycoplasmoides genitalium) protein is Oligopeptide transport ATP-binding protein OppF (oppF).